Consider the following 358-residue polypeptide: Nuclear receptor subfamily 1 group I member 3 (358 aa).

The nuclear receptor DNA-binding region spans 18-93; that stretch reads PRNCVVCGDR…VGMRKDMILS (76 aa). The segment at 21 to 41 adopts an NR C4-type zinc-finger fold; it reads CVVCGDRATGYHFHALTCEGC. T48 bears the Phosphothreonine; by PKC mark. The segment at 57–81 adopts an NR C4-type zinc-finger fold; sequence CPFAGRCEVSKAQRRHCPACRLQKC. The region spanning 119 to 358 is the NR LBD domain; sequence QQKELIQTLL…MMPLLGEICS (240 aa).

It belongs to the nuclear hormone receptor family. NR1 subfamily. In terms of assembly, heterodimer of NR1I3 and RXR. Interacts with PSMC4. Interacts with ECT2. Directly interacts with DNAJC7; this complex may also include HSP90. Interacts with CRY1. Interacts with CRY2 in a ligand-dependent manner. Post-translationally, phosphorylated at Thr-48 by PKC, dephosphorylation of Thr-48 is required for nuclear translocation and activation.

It is found in the nucleus. Its subcellular location is the cytoplasm. The protein resides in the cytoskeleton. Its function is as follows. Binds and transactivates the retinoic acid response elements that control expression of the retinoic acid receptor beta 2 and alcohol dehydrogenase 3 genes. Transactivates both the phenobarbital responsive element module of the human CYP2B6 gene and the CYP3A4 xenobiotic response element. The chain is Nuclear receptor subfamily 1 group I member 3 (Nr1i3) from Rattus norvegicus (Rat).